Here is a 974-residue protein sequence, read N- to C-terminus: Villin-4 (974 aa).

Gelsolin-like repeat units follow at residues 29–79 (FIPT…DEAG), 150–190 (VHVK…QERA), 262–305 (GQAN…DDRK), 394–451 (LQVW…EERG), 532–572 (MQAI…TDQE), and 634–675 (LKVT…KNKL). Residues 738-783 (VKNGGTPVADKPKRRTPASYGGRASVPDKSQQRSRSMSFSPDRVRV) form a disordered region. A phosphoserine mark is found at Ser777 and Ser787. Disordered regions lie at residues 801–833 (NARN…APKS) and 845–930 (KIPP…PVSD). Low complexity predominate over residues 824–833 (SSKFAPAPKS). Residues 872–887 (NSKEQEEKKENDKEEG) show a composition bias toward basic and acidic residues. The segment covering 888 to 898 (SMSSRIESLTI) has biased composition (polar residues). Ser890 bears the Phosphoserine mark. Positions 909 to 974 (EEDLPAHPYD…NKFKMAVQLF (66 aa)) constitute an HP domain. The span at 912–921 (LPAHPYDRLK) shows a compositional bias: basic and acidic residues.

Belongs to the villin/gelsolin family. In terms of tissue distribution, preferentially expressed in vegetative tissues. Detected in the whole seedling, hypocotyl, cotyledon, primary root, roots hair cells and trichomes. Expressed in flowers but not in the silique.

The protein resides in the cytoplasm. The protein localises to the cytoskeleton. Its function is as follows. Binds actin and actin filament bundles in a Ca(2+)-insensitive manner, but caps the barbed end of actin filaments and is able to sever them in a calcium-dependent manner. Involved in root hair growth through regulating actin organization in a Ca(2+)-dependent manner. The polypeptide is Villin-4 (Arabidopsis thaliana (Mouse-ear cress)).